Here is a 1306-residue protein sequence, read N- to C-terminus: Synergin gamma (1306 aa).

A coiled-coil region spans residues 113–153 (MQKQFAEEQQKRFEQQQKLLEEERKRRQFEEQKQKLRLLSS). Disordered regions lie at residues 176-196 (GFSRDAKMHPTPASHPKKQGP) and 252-285 (SGPASAEAEKTSDQTLSKEESGVGVFPSQDPAQS). A compositionally biased stretch (basic and acidic residues) spans 258–272 (EAEKTSDQTLSKEES). An EH domain is found at 293–404 (NESLVPDAYK…TPVSQPTAMP (112 aa)). The DFXDF motif 1 motif lies at 455–459 (DFQDF). The interval 460–494 (QDASKSGSIDDSFTDFQEMPASSKTSNSQHGNSAP) is disordered. Position 471 is a phosphoserine (Ser471). Lys509 bears the N6-acetyllysine mark. An interaction with AP1G1 region spans residues 514 to 778 (KGISTDKPSE…ADFHSSKFSS (265 aa)). Residues 559-601 (STGTDDGFTDFKTADSVSPLEPPTKDTFPSAFASGAAQQTQTQ) form a disordered region. Ser576 carries the phosphoserine modification. Residues 661-673 (LADDFGEFNLFGE) are interaction with AP1G1, AP1G2 and GGA1. The DFXDF motif 2 signature appears at 685 to 689 (DFADF). The tract at residues 697-730 (ISSEPKASDKYEALREEVSPSPLSSSTVEGAQHP) is disordered. Residues 702–714 (KASDKYEALREEV) show a composition bias toward basic and acidic residues. Residue Ser715 is modified to Phosphoserine. Lys736 is modified (N6-acetyllysine). Ser744 and Ser764 each carry phosphoserine. The DFXDF motif 3 motif lies at 767-771 (DFADF). Residues Ser804, Ser844, Ser847, Ser901, Ser911, Ser927, Ser974, Ser998, Ser1065, Ser1067, Ser1079, and Ser1090 each carry the phosphoserine modification. Disordered regions lie at residues 986–1016 (PTVDRSQETSCPSPASSVASHETPKEGADDF) and 1065–1090 (SLSLGDKEISRSSPSPALEQPFRDRS). Positions 993–1005 (ETSCPSPASSVAS) are enriched in polar residues. Position 1092 is a phosphothreonine (Thr1092).

As to quaternary structure, self-associates. Interacts with GGA1 (via GAE domain). Interacts with GGA2 and GGA3. Interacts with AP1G1 (via GAE domain), a subunit of adapter protein complex AP-1. Interacts with AP1G2 (via GAE domain) a subunit of adapter protein complex AP-1. Component of the aftiphilin/p200/gamma-synergin complex, at least composed of AFTPH/aftiphilin, HEATR5B/p200a and SYNRG/gamma-synergin, which plays a role in the AP1G1/AP-1-mediated trafficking of transferrin from early to recycling endosomes. Within the complex interacts with AFTPH/aftiphilin and HEATR5B/p200a; the interactions are direct. Interacts (via EH domain) with SCAMP1.

It is found in the cytoplasm. It localises to the cytosol. Its subcellular location is the golgi apparatus. The protein localises to the trans-Golgi network membrane. The protein resides in the perinuclear region. It is found in the cytoplasmic vesicle. It localises to the clathrin-coated vesicle. Plays a role in endocytosis and/or membrane trafficking at the trans-Golgi network (TGN). May act by linking the adapter protein complex AP-1 to other proteins. Component of clathrin-coated vesicles. Component of the aftiphilin/p200/gamma-synergin complex, which plays roles in AP1G1/AP-1-mediated protein trafficking including the trafficking of transferrin from early to recycling endosomes, and the membrane trafficking of furin and the lysosomal enzyme cathepsin D between the trans-Golgi network (TGN) and endosomes. The chain is Synergin gamma (Synrg) from Mus musculus (Mouse).